The chain runs to 274 residues: MREYLNFLKYIKENGVLKGDRTGTGTRSIFGYQMRFDLQKGFPLVTTKKIHIPSVVHELLWFLSGSTNIKYLNDNNVRIWNEWATVDGELGPIYGKQWRDFNGQGIDQIADVIQMLKTNPNSRRILVSAWNPCVVPSEKISPQENVVKGNSALPPCHAMFQFYVANNKLSCMLTQRSADAFLGVPFNIASYSLLTHMVAQQCNLDVGEFIWSGGDCHIYNNHIEQVNEQLSREPLALPTLKILRKPNSIFDYKYEDFEFENYNHHPAIKAKISV.

Arg21 provides a ligand contact to dUMP. A (6R)-5,10-methylene-5,6,7,8-tetrahydrofolate-binding site is contributed by His51. Residue 123–124 (RR) participates in dUMP binding. Cys156 functions as the Nucleophile in the catalytic mechanism. DUMP-binding positions include 176-179 (RSAD), Asn187, and 217-219 (HIY). Residue Asp179 coordinates (6R)-5,10-methylene-5,6,7,8-tetrahydrofolate. Position 273 (Ser273) interacts with (6R)-5,10-methylene-5,6,7,8-tetrahydrofolate.

This sequence belongs to the thymidylate synthase family. Bacterial-type ThyA subfamily. As to quaternary structure, homodimer.

It is found in the cytoplasm. It catalyses the reaction dUMP + (6R)-5,10-methylene-5,6,7,8-tetrahydrofolate = 7,8-dihydrofolate + dTMP. The protein operates within pyrimidine metabolism; dTTP biosynthesis. Catalyzes the reductive methylation of 2'-deoxyuridine-5'-monophosphate (dUMP) to 2'-deoxythymidine-5'-monophosphate (dTMP) while utilizing 5,10-methylenetetrahydrofolate (mTHF) as the methyl donor and reductant in the reaction, yielding dihydrofolate (DHF) as a by-product. This enzymatic reaction provides an intracellular de novo source of dTMP, an essential precursor for DNA biosynthesis. This is Thymidylate synthase from Francisella tularensis subsp. novicida (strain U112).